A 178-amino-acid chain; its full sequence is Cell division protein SepF (178 aa).

Positions 19-45 (EHYESEHHTPHKDEDDSMEHDREERRA) are enriched in basic and acidic residues. Positions 19–65 (EHYESEHHTPHKDEDDSMEHDREERRAPAPVREIARETPTPHAAEEE) are disordered.

This sequence belongs to the SepF family. Homodimer. Interacts with FtsZ.

The protein resides in the cytoplasm. Functionally, cell division protein that is part of the divisome complex and is recruited early to the Z-ring. Probably stimulates Z-ring formation, perhaps through the cross-linking of FtsZ protofilaments. Its function overlaps with FtsA. This Arthrobacter sp. (strain FB24) protein is Cell division protein SepF.